Consider the following 347-residue polypeptide: UPF0283 membrane protein ECA1987 (347 aa).

A compositionally biased stretch (basic and acidic residues) spans 1–11; sequence MNEPLKPRVTF. The tract at residues 1 to 48 is disordered; that stretch reads MNEPLKPRVTFDDVSPQEPQPQLRAGLAFDEQSSTPFSPISREEEVPE. The next 3 helical transmembrane spans lie at 70-90, 99-119, and 213-233; these read MVMAGVALFGISALAQGVQSL, WIALGGITAGSLIVAAGVGSL, and ESTLMIAVSPLALVDMAFIAW.

The protein belongs to the UPF0283 family.

It localises to the cell inner membrane. The chain is UPF0283 membrane protein ECA1987 from Pectobacterium atrosepticum (strain SCRI 1043 / ATCC BAA-672) (Erwinia carotovora subsp. atroseptica).